A 257-amino-acid polypeptide reads, in one-letter code: Pimeloyl-[acyl-carrier protein] methyl ester esterase (257 aa).

The AB hydrolase-1 domain occupies 16-240 (LVLIHGWGMN…EQASHAPFIS (225 aa)). Residues Trp-22, 82–83 (SL), and 143–147 (FMALQ) contribute to the substrate site. Ser-82 serves as the catalytic Nucleophile. Active-site residues include Asp-207 and His-235. A substrate-binding site is contributed by His-235.

The protein belongs to the AB hydrolase superfamily. Carboxylesterase BioH family. As to quaternary structure, monomer.

Its subcellular location is the cytoplasm. It carries out the reaction 6-carboxyhexanoyl-[ACP] methyl ester + H2O = 6-carboxyhexanoyl-[ACP] + methanol + H(+). It participates in cofactor biosynthesis; biotin biosynthesis. In terms of biological role, the physiological role of BioH is to remove the methyl group introduced by BioC when the pimeloyl moiety is complete. It allows to synthesize pimeloyl-ACP via the fatty acid synthetic pathway through the hydrolysis of the ester bonds of pimeloyl-ACP esters. The protein is Pimeloyl-[acyl-carrier protein] methyl ester esterase of Aliivibrio fischeri (strain ATCC 700601 / ES114) (Vibrio fischeri).